We begin with the raw amino-acid sequence, 66 residues long: Large ribosomal subunit protein uL30 (66 aa).

Belongs to the universal ribosomal protein uL30 family. As to quaternary structure, part of the 50S ribosomal subunit.

The chain is Large ribosomal subunit protein uL30 from Azorhizobium caulinodans (strain ATCC 43989 / DSM 5975 / JCM 20966 / LMG 6465 / NBRC 14845 / NCIMB 13405 / ORS 571).